We begin with the raw amino-acid sequence, 146 residues long: Ribonuclease H (146 aa).

The RNase H type-1 domain occupies 1–143; the sequence is MKKRVTIYTD…CDELARQAIK (143 aa). Mg(2+) is bound by residues aspartate 10, glutamate 48, aspartate 70, and aspartate 135.

The protein belongs to the RNase H family. Monomer. Requires Mg(2+) as cofactor.

The protein resides in the cytoplasm. The catalysed reaction is Endonucleolytic cleavage to 5'-phosphomonoester.. Functionally, endonuclease that specifically degrades the RNA of RNA-DNA hybrids. The protein is Ribonuclease H of Chlorobium limicola (strain DSM 245 / NBRC 103803 / 6330).